The following is a 465-amino-acid chain: A-type ATP synthase subunit B (465 aa).

The protein belongs to the ATPase alpha/beta chains family. As to quaternary structure, has multiple subunits with at least A(3), B(3), C, D, E, F, H, I and proteolipid K(x).

It localises to the cell membrane. Functionally, component of the A-type ATP synthase that produces ATP from ADP in the presence of a proton gradient across the membrane. The B chain is a regulatory subunit. The sequence is that of A-type ATP synthase subunit B from Thermococcus onnurineus (strain NA1).